The primary structure comprises 938 residues: Phosphoenolpyruvate carboxylase (938 aa).

Catalysis depends on residues H151 and K591.

It belongs to the PEPCase type 1 family. The cofactor is Mg(2+).

It catalyses the reaction oxaloacetate + phosphate = phosphoenolpyruvate + hydrogencarbonate. Functionally, forms oxaloacetate, a four-carbon dicarboxylic acid source for the tricarboxylic acid cycle. This is Phosphoenolpyruvate carboxylase from Roseiflexus castenholzii (strain DSM 13941 / HLO8).